We begin with the raw amino-acid sequence, 33 residues long: Photosystem II reaction center protein Psb30 (33 aa).

A helical membrane pass occupies residues 8–28 (QLTALAFIVLSGPLVIALLAF).

Belongs to the Psb30/Ycf12 family. As to quaternary structure, PSII is composed of 1 copy each of membrane proteins PsbA, PsbB, PsbC, PsbD, PsbE, PsbF, PsbH, PsbI, PsbJ, PsbK, PsbL, PsbM, PsbT, PsbX, PsbY, PsbZ, Psb30/Ycf12, peripheral proteins of the oxygen-evolving complex and a large number of cofactors. It forms dimeric complexes.

Its subcellular location is the plastid. The protein resides in the chloroplast thylakoid membrane. A core subunit of photosystem II (PSII), probably helps stabilize the reaction center. This is Photosystem II reaction center protein Psb30 from Staurastrum punctulatum (Green alga).